A 178-amino-acid chain; its full sequence is MSKNRAEKAEIIEEIGEKLNEYPIIYLTNFEGLTVAQSNDLRGRFREAGVEYQVTKNTLARLALDRIEGKDALEEFFAGPTAIAFSEDPAKPARVLQDFLEEEELGRPELKVAWIEGDMYDDPEALDTLAELKSREELIGEVIGRLLAPAQNLVGGLQGPGQRLSGLLQSLADEEEDE.

Belongs to the universal ribosomal protein uL10 family. In terms of assembly, part of the ribosomal stalk of the 50S ribosomal subunit. The N-terminus interacts with L11 and the large rRNA to form the base of the stalk. The C-terminus forms an elongated spine to which L12 dimers bind in a sequential fashion forming a multimeric L10(L12)X complex.

In terms of biological role, forms part of the ribosomal stalk, playing a central role in the interaction of the ribosome with GTP-bound translation factors. This is Large ribosomal subunit protein uL10 from Salinibacter ruber (strain DSM 13855 / M31).